The sequence spans 248 residues: MARQFFVGGNFKMNGTRESVSKIVDGLNKAELPSNVEVVIAPPAPYIALAVNENKQKTIEVSAQNCFDKASGAYTGEISPEQIKDLGATWTLTGHSERRTIIKESDDFIASKTKFALDQGLSVILCIGETLEERKANVTLDVCARQLDAVARVVSDWSKIVVAYEPVWAIGTGLAATPEDAQETHKAIREHLSKSIGADAAEKTRILYGGSVNGKNAPEFKDKADVDGFLVGGASLKPEFVDIIKSRL.

2 residues coordinate substrate: asparagine 10 and lysine 12. Histidine 95 acts as the Electrophile in catalysis. Glutamate 165 (proton acceptor) is an active-site residue.

The protein belongs to the triosephosphate isomerase family. Homodimer.

The catalysed reaction is D-glyceraldehyde 3-phosphate = dihydroxyacetone phosphate. It functions in the pathway carbohydrate biosynthesis; gluconeogenesis. Its pathway is carbohydrate degradation; glycolysis; D-glyceraldehyde 3-phosphate from glycerone phosphate: step 1/1. In Debaryomyces hansenii (strain ATCC 36239 / CBS 767 / BCRC 21394 / JCM 1990 / NBRC 0083 / IGC 2968) (Yeast), this protein is Triosephosphate isomerase (TPI1).